The chain runs to 938 residues: ATP-dependent 6-phosphofructokinase subunit beta (938 aa).

The segment at 1–552 (MTQSLPLLNG…HLDNFMAINS (552 aa)) is N-terminal catalytic PFK domain 1. ATP-binding positions include G185, 249-250 (RC), and 279-282 (GDGS). D280 provides a ligand contact to Mg(2+). Residues 325 to 327 (SID), R362, 369 to 371 (MGR), E426, R454, and 460 to 463 (HVQR) contribute to the beta-D-fructose 6-phosphate site. D327 (proton acceptor) is an active-site residue. Residues 553–566 (ADHIEPKLPEHTHM) form an interdomain linker region. A C-terminal regulatory PFK domain 2 region spans residues 567–938 (KIAIVNVGAP…ADHLVGRKKL (372 aa)). Beta-D-fructose 2,6-bisphosphate is bound by residues R637, 695 to 699 (TLSNN), R733, 740 to 742 (QGG), K826, 832 to 835 (HVQQ), and R915.

The protein belongs to the phosphofructokinase type A (PFKA) family. ATP-dependent PFK group I subfamily. Eukaryotic two domain clade 'E' sub-subfamily. In terms of assembly, heterooctamer of 4 alpha and 4 beta chains. Mg(2+) serves as cofactor.

The protein localises to the cytoplasm. It carries out the reaction beta-D-fructose 6-phosphate + ATP = beta-D-fructose 1,6-bisphosphate + ADP + H(+). It participates in carbohydrate degradation; glycolysis; D-glyceraldehyde 3-phosphate and glycerone phosphate from D-glucose: step 3/4. Its activity is regulated as follows. Allosterically activated by ADP, AMP, or fructose 2,6-bisphosphate, and allosterically inhibited by ATP or citrate. In terms of biological role, catalyzes the phosphorylation of D-fructose 6-phosphate to fructose 1,6-bisphosphate by ATP, the first committing step of glycolysis. The chain is ATP-dependent 6-phosphofructokinase subunit beta (PFK2) from Kluyveromyces lactis (strain ATCC 8585 / CBS 2359 / DSM 70799 / NBRC 1267 / NRRL Y-1140 / WM37) (Yeast).